The sequence spans 184 residues: Ribosome maturation factor RimP (184 aa).

The protein belongs to the RimP family.

It localises to the cytoplasm. Its function is as follows. Required for maturation of 30S ribosomal subunits. This Corynebacterium diphtheriae (strain ATCC 700971 / NCTC 13129 / Biotype gravis) protein is Ribosome maturation factor RimP.